A 351-amino-acid chain; its full sequence is DNA polymerase IV (351 aa).

In terms of domain architecture, UmuC spans 4-185; sequence IIHVDMDCFF…LPLAKIPGVG (182 aa). The Mg(2+) site is built by Asp-8 and Asp-103. Glu-104 is an active-site residue.

The protein belongs to the DNA polymerase type-Y family. In terms of assembly, monomer. It depends on Mg(2+) as a cofactor.

It is found in the cytoplasm. The enzyme catalyses DNA(n) + a 2'-deoxyribonucleoside 5'-triphosphate = DNA(n+1) + diphosphate. Poorly processive, error-prone DNA polymerase involved in untargeted mutagenesis. Copies undamaged DNA at stalled replication forks, which arise in vivo from mismatched or misaligned primer ends. These misaligned primers can be extended by PolIV. Exhibits no 3'-5' exonuclease (proofreading) activity. May be involved in translesional synthesis, in conjunction with the beta clamp from PolIII. In Salmonella choleraesuis (strain SC-B67), this protein is DNA polymerase IV.